The primary structure comprises 238 residues: MEFDFDISQSLPDFITKVDNTLNPFNRQLDVTSRKRLQQNLIVIIDRMGMASAKARLLRRLTAQSLKGAITTAAKLGISDHRLYILKETEVNRGLGKVVGILKVGKKKLFVVDYTGAQHECLPLCVLDFYVHESQQRTGNGKLLFEYMLKAENVTPSHLAIDRPSFKFLSFLQKHYGLRDTLPKQVNNFVVFEDLFNLIRKKKSGGITQHQPTSLKPPIPPTGRRCMHFLNLTIWQTR.

Residues 1–196 form the N-acetyltransferase domain; the sequence is MEFDFDISQS…NNFVVFEDLF (196 aa). Acetyl-CoA contacts are provided by residues 129-142 and 165-174; these read FYVHESQQRTGNGK and SFKFLSFLQK.

This sequence belongs to the acetyltransferase ATAT1 family.

It carries out the reaction L-lysyl-[alpha-tubulin] + acetyl-CoA = N(6)-acetyl-L-lysyl-[alpha-tubulin] + CoA + H(+). Functionally, specifically acetylates 'Lys-40' in alpha-tubulin on the lumenal side of microtubules. Promotes microtubule destabilization and accelerates microtubule dynamics; this activity may be independent of acetylation activity. Acetylates alpha-tubulin with a slow enzymatic rate, due to a catalytic site that is not optimized for acetyl transfer. Enters the microtubule through each end and diffuses quickly throughout the lumen of microtubules. Acetylates only long/old microtubules because of its slow acetylation rate since it does not have time to act on dynamically unstable microtubules before the enzyme is released. The protein is Alpha-tubulin N-acetyltransferase of Trichoplax adhaerens (Trichoplax reptans).